Consider the following 39-residue polypeptide: Cytochrome b559 subunit beta (39 aa).

The chain crosses the membrane as a helical span at residues 14-30; that stretch reads WLAVHGLAVPTVFFLGS. His-18 serves as a coordination point for heme.

The protein belongs to the PsbE/PsbF family. Heterodimer of an alpha subunit and a beta subunit. PSII is composed of 1 copy each of membrane proteins PsbA, PsbB, PsbC, PsbD, PsbE, PsbF, PsbH, PsbI, PsbJ, PsbK, PsbL, PsbM, PsbT, PsbX, PsbY, PsbZ, Psb30/Ycf12, at least 3 peripheral proteins of the oxygen-evolving complex and a large number of cofactors. It forms dimeric complexes. Heme b serves as cofactor.

It localises to the plastid membrane. Functionally, this b-type cytochrome is tightly associated with the reaction center of photosystem II (PSII). PSII is a light-driven water:plastoquinone oxidoreductase that uses light energy to abstract electrons from H(2)O, generating O(2) and a proton gradient subsequently used for ATP formation. It consists of a core antenna complex that captures photons, and an electron transfer chain that converts photonic excitation into a charge separation. The polypeptide is Cytochrome b559 subunit beta (Cuscuta europaea (European dodder)).